The primary structure comprises 318 residues: L-malyl-CoA/beta-methylmalyl-CoA lyase (318 aa).

F19, R24, K30, and R76 together coordinate substrate. The Mg(2+) site is built by E141 and D168. Substrate contacts are provided by residues 167-168 (AD) and 251-252 (IH).

The protein belongs to the HpcH/HpaI aldolase family. As to quaternary structure, homohexamer. Dimer of trimers. Requires Mg(2+) as cofactor. It depends on Mn(2+) as a cofactor.

It carries out the reaction (S)-malyl-CoA = glyoxylate + acetyl-CoA. It catalyses the reaction (2R,3S)-beta-methylmalyl-CoA = propanoyl-CoA + glyoxylate. Its function is as follows. Involved in the ethylmalonyl-CoA pathway for acetate assimilation. Catalyzes the reversible condensation of glyoxylate and acetyl-CoA to L-malyl-CoA and the reversible condensation of glyoxylate and propionyl-CoA to yield beta-methylmalyl-CoA. This is L-malyl-CoA/beta-methylmalyl-CoA lyase from Cereibacter sphaeroides (strain ATCC 17029 / ATH 2.4.9) (Rhodobacter sphaeroides).